Here is a 384-residue protein sequence, read N- to C-terminus: uncharacterized protein (384 aa).

Basic residues predominate over residues 327–339; that stretch reads KKEKKEKKEKKPK. The segment at 327 to 358 is disordered; sequence KKEKKEKKEKKPKKAVEEEPKQYLTPEFVNDD.

This is an uncharacterized protein from Magallana gigas (Pacific oyster).